The sequence spans 930 residues: Translation initiation factor IF-2 (930 aa).

Residues 50–67 (FKPAAAPKVEAKPAAPKV) are compositionally biased toward low complexity. Disordered stretches follow at residues 50–217 (FKPA…SSEE) and 260–346 (EVVP…HELP). Composition is skewed to basic and acidic residues over residues 68–90 (SAEK…EAKP) and 110–125 (FKAE…AERR). The segment covering 129–141 (KGNNRDQQQNGNR) has biased composition (low complexity). Basic and acidic residues-rich tracts occupy residues 157–167 (RDNRRFNDQAK) and 262–295 (VPEK…DGPR). A compositionally biased stretch (low complexity) spans 309–318 (NQKNSNWNNN). A compositionally biased stretch (basic and acidic residues) spans 337–346 (VTERKFHELP). Positions 432 to 599 (ERPPVVTIMG…TVLLVAEIQE (168 aa)) constitute a tr-type G domain. The G1 stretch occupies residues 441 to 448 (GHVDHGKT). 441–448 (GHVDHGKT) is a binding site for GTP. A G2 region spans residues 466-470 (GITQH). The interval 487 to 490 (DTPG) is G3. GTP contacts are provided by residues 487–491 (DTPGH) and 541–544 (NKID). Residues 541–544 (NKID) are G4. A G5 region spans residues 577-579 (SAK).

Belongs to the TRAFAC class translation factor GTPase superfamily. Classic translation factor GTPase family. IF-2 subfamily.

The protein resides in the cytoplasm. Its function is as follows. One of the essential components for the initiation of protein synthesis. Protects formylmethionyl-tRNA from spontaneous hydrolysis and promotes its binding to the 30S ribosomal subunits. Also involved in the hydrolysis of GTP during the formation of the 70S ribosomal complex. In Streptococcus pneumoniae (strain ATCC 700669 / Spain 23F-1), this protein is Translation initiation factor IF-2.